Here is a 483-residue protein sequence, read N- to C-terminus: UDP-N-acetylmuramate--L-alanine ligase (483 aa).

112–118 (GTHGKTT) is a binding site for ATP.

This sequence belongs to the MurCDEF family.

The protein resides in the cytoplasm. The enzyme catalyses UDP-N-acetyl-alpha-D-muramate + L-alanine + ATP = UDP-N-acetyl-alpha-D-muramoyl-L-alanine + ADP + phosphate + H(+). The protein operates within cell wall biogenesis; peptidoglycan biosynthesis. Cell wall formation. This Ralstonia nicotianae (strain ATCC BAA-1114 / GMI1000) (Ralstonia solanacearum) protein is UDP-N-acetylmuramate--L-alanine ligase.